Here is a 110-residue protein sequence, read N- to C-terminus: Flagellar hook-basal body complex protein FliE (110 aa).

The protein belongs to the FliE family.

It is found in the bacterial flagellum basal body. The polypeptide is Flagellar hook-basal body complex protein FliE (Pseudomonas putida (strain W619)).